A 420-amino-acid chain; its full sequence is Light-independent protochlorophyllide reductase subunit N (420 aa).

Positions 21, 46, and 103 each coordinate [4Fe-4S] cluster.

Belongs to the BchN/ChlN family. In terms of assembly, protochlorophyllide reductase is composed of three subunits; BchL, BchN and BchB. Forms a heterotetramer of two BchB and two BchN subunits. It depends on [4Fe-4S] cluster as a cofactor.

It carries out the reaction chlorophyllide a + oxidized 2[4Fe-4S]-[ferredoxin] + 2 ADP + 2 phosphate = protochlorophyllide a + reduced 2[4Fe-4S]-[ferredoxin] + 2 ATP + 2 H2O. It functions in the pathway porphyrin-containing compound metabolism; bacteriochlorophyll biosynthesis (light-independent). Functionally, component of the dark-operative protochlorophyllide reductase (DPOR) that uses Mg-ATP and reduced ferredoxin to reduce ring D of protochlorophyllide (Pchlide) to form chlorophyllide a (Chlide). This reaction is light-independent. The NB-protein (BchN-BchB) is the catalytic component of the complex. This is Light-independent protochlorophyllide reductase subunit N from Chlorobium phaeobacteroides (strain DSM 266 / SMG 266 / 2430).